The primary structure comprises 369 residues: Serine/threonine-protein phosphatase PP2A-1 catalytic subunit (369 aa).

A disordered region spans residues 1–57; that stretch reads MDTDLDVPMQDAVTEQLTPTVSEDMDLNNNSSDNNAEEFSVDDLKPGSSGIADHKSS. 4 residues coordinate Mn(2+): D117, H119, D145, and N177. H178 functions as the Proton donor in the catalytic mechanism. 2 residues coordinate Mn(2+): H227 and H301. The segment at 348–369 is disordered; that stretch reads QYDPSVRPGEPSVSRKTPDYFL. The residue at position 369 (L369) is a Leucine methyl ester.

This sequence belongs to the PPP phosphatase family. PP-2A subfamily. In terms of assembly, inactivated in a complex with phosphatase methylesterase PPE1 (PP2Ai). Interacts with phosphatase 2A activator RRD2, which can reactivate PP2Ai by dissociating the catalytic subunit from the complex. Forms a ternary complex with RRD2-TAP42. Mn(2+) is required as a cofactor. In terms of processing, reversibly methyl esterified on Leu-369 by leucine carboxyl methyltransferase 1 (PPM1) and protein phosphatase methylesterase 1 (PPE1). Carboxyl methylation influences the affinity of the catalytic subunit for the different regulatory subunits, thereby modulating the PP2A holoenzyme's substrate specificity, enzyme activity and cellular localization.

It carries out the reaction O-phospho-L-seryl-[protein] + H2O = L-seryl-[protein] + phosphate. The enzyme catalyses O-phospho-L-threonyl-[protein] + H2O = L-threonyl-[protein] + phosphate. In terms of biological role, exact function not known, phosphatase 2A performs an essential cellular function. The chain is Serine/threonine-protein phosphatase PP2A-1 catalytic subunit (PPH21) from Saccharomyces cerevisiae (strain ATCC 204508 / S288c) (Baker's yeast).